We begin with the raw amino-acid sequence, 273 residues long: Orotidine 5'-phosphate decarboxylase (273 aa).

Catalysis depends on K96, which acts as the Proton donor.

Belongs to the OMP decarboxylase family. Type 2 subfamily.

The catalysed reaction is orotidine 5'-phosphate + H(+) = UMP + CO2. It functions in the pathway pyrimidine metabolism; UMP biosynthesis via de novo pathway; UMP from orotate: step 2/2. The sequence is that of Orotidine 5'-phosphate decarboxylase from Nocardioides sp. (strain ATCC BAA-499 / JS614).